Here is a 213-residue protein sequence, read N- to C-terminus: Large ribosomal subunit protein eL14 (213 aa).

Lysine 79 is modified (N6-acetyllysine). Residue lysine 85 is modified to N6-acetyllysine; alternate. The residue at position 85 (lysine 85) is an N6-succinyllysine; alternate. Lysine 124 is covalently cross-linked (Glycyl lysine isopeptide (Lys-Gly) (interchain with G-Cter in SUMO2)). At serine 139 the chain carries Phosphoserine. The disordered stretch occupies residues 166–213 (TAGKKAPAQKAPAQKAAGQKAAPPPKAQKVQKPPAQKAPAPKASGEKA). One copy of the 1-1; approximate repeat lies at 169–173 (KKAPA). Residues 169 to 188 (KKAPAQKAPAQKAAGQKAAP) form a 4 X 5 AA tandem repeats of Q-K-A-[APS]-X region. 5 consecutive repeat copies span residues 174-178 (QKAPA), 179-183 (QKAAG), 184-188 (QKAAP), 191-193 (KAQ), and 194-196 (KVQ). Residues 191 to 196 (KAQKVQ) form a 2 X 3 AA tandem repeats of K-G-Q region. Lysine 202 is modified (N6-succinyllysine).

Belongs to the eukaryotic ribosomal protein eL14 family. Component of the large ribosomal subunit.

It is found in the cytoplasm. Functionally, component of the large ribosomal subunit. The ribosome is a large ribonucleoprotein complex responsible for the synthesis of proteins in the cell. The protein is Large ribosomal subunit protein eL14 (RPL14) of Sus scrofa (Pig).